Here is a 439-residue protein sequence, read N- to C-terminus: Chromosomal replication initiator protein DnaA (439 aa).

The interval 1–75 (MESWSRCLER…GIREVVLAIG (75 aa)) is domain I, interacts with DnaA modulators. Positions 75-101 (GSRPKTTELTVPVDTTGRLSQTVPFNG) are domain II. The interval 102–319 (NLDTHYNFDN…GALNTLVARA (218 aa)) is domain III, AAA+ region. Positions 147, 149, 150, and 151 each coordinate ATP. Residues 320–439 (NFTGRAVTIE…WDKLMRKFSE (120 aa)) form a domain IV, binds dsDNA region.

This sequence belongs to the DnaA family. Oligomerizes as a right-handed, spiral filament on DNA at oriC.

It is found in the cytoplasm. Plays an essential role in the initiation and regulation of chromosomal replication. ATP-DnaA binds to the origin of replication (oriC) to initiate formation of the DNA replication initiation complex once per cell cycle. Binds the DnaA box (a 9 base pair repeat at the origin) and separates the double-stranded (ds)DNA. Forms a right-handed helical filament on oriC DNA; dsDNA binds to the exterior of the filament while single-stranded (ss)DNA is stabiized in the filament's interior. The ATP-DnaA-oriC complex binds and stabilizes one strand of the AT-rich DNA unwinding element (DUE), permitting loading of DNA polymerase. After initiation quickly degrades to an ADP-DnaA complex that is not apt for DNA replication. Binds acidic phospholipids. This chain is Chromosomal replication initiator protein DnaA, found in Xylella fastidiosa (strain Temecula1 / ATCC 700964).